Reading from the N-terminus, the 236-residue chain is 2-C-methyl-D-erythritol 4-phosphate cytidylyltransferase (236 aa).

It belongs to the IspD/TarI cytidylyltransferase family. IspD subfamily.

The enzyme catalyses 2-C-methyl-D-erythritol 4-phosphate + CTP + H(+) = 4-CDP-2-C-methyl-D-erythritol + diphosphate. Its pathway is isoprenoid biosynthesis; isopentenyl diphosphate biosynthesis via DXP pathway; isopentenyl diphosphate from 1-deoxy-D-xylulose 5-phosphate: step 2/6. Catalyzes the formation of 4-diphosphocytidyl-2-C-methyl-D-erythritol from CTP and 2-C-methyl-D-erythritol 4-phosphate (MEP). This Burkholderia vietnamiensis (strain G4 / LMG 22486) (Burkholderia cepacia (strain R1808)) protein is 2-C-methyl-D-erythritol 4-phosphate cytidylyltransferase.